The following is a 215-amino-acid chain: MSRVYDWFEERLEIQAIADDVSSKYVPPHVNIFYCLGGITFTCFIIQVATGFAMTFYYRPTVTEAFLSVKYIMNEVNFGWLIRSIHRWSASMMVLMMILHVCRVYLTGGFKKPRELTWVTGIILAILTVSFGVTGYSLPWDQVGYWAVKIVTGVPEAIPLIGNFIVELLRGSVSVGQSTLTRFYSLHTFVLPLLTATFMLGHFLMIRKQGISGPL.

The chain crosses the membrane as a helical span at residues 32–52 (IFYCLGGITFTCFIIQVATGF). Cysteine 35 is a heme c binding site. Residues histidine 86 and histidine 100 each coordinate heme b. 3 helical membrane-spanning segments follow: residues 90–110 (ASMM…TGGF), 116–136 (LTWV…VTGY), and 186–206 (LHTF…FLMI). Heme b contacts are provided by histidine 187 and histidine 202.

The protein belongs to the cytochrome b family. PetB subfamily. In terms of assembly, the 4 large subunits of the cytochrome b6-f complex are cytochrome b6, subunit IV (17 kDa polypeptide, PetD), cytochrome f and the Rieske protein, while the 4 small subunits are PetG, PetL, PetM and PetN. The complex functions as a dimer. The cofactor is heme b. It depends on heme c as a cofactor.

The protein resides in the plastid. The protein localises to the chloroplast thylakoid membrane. In terms of biological role, component of the cytochrome b6-f complex, which mediates electron transfer between photosystem II (PSII) and photosystem I (PSI), cyclic electron flow around PSI, and state transitions. The sequence is that of Cytochrome b6 from Euglena gracilis.